The primary structure comprises 155 residues: uncharacterized protein (155 aa).

In terms of domain architecture, N-acetyltransferase spans Leu-6 to Leu-155. Residues Ile-69–Val-71, Lys-77–Lys-82, and Gln-111–Lys-117 contribute to the CoA site.

In terms of biological role, probable N-acetyltransferase. This is an uncharacterized protein from Bacillus subtilis (strain 168).